A 274-amino-acid polypeptide reads, in one-letter code: N-acetylmuramic acid 6-phosphate etherase (274 aa).

The SIS domain maps to 52–215; it reads IIPRMEQGGR…STSIMIRLGR (164 aa). The active-site Proton donor is Glu80. The active site involves Glu111.

This sequence belongs to the GCKR-like family. MurNAc-6-P etherase subfamily. As to quaternary structure, homodimer.

The catalysed reaction is N-acetyl-D-muramate 6-phosphate + H2O = N-acetyl-D-glucosamine 6-phosphate + (R)-lactate. The protein operates within amino-sugar metabolism; N-acetylmuramate degradation. Functionally, specifically catalyzes the cleavage of the D-lactyl ether substituent of MurNAc 6-phosphate, producing GlcNAc 6-phosphate and D-lactate. The chain is N-acetylmuramic acid 6-phosphate etherase from Porphyromonas gingivalis (strain ATCC BAA-308 / W83).